A 104-amino-acid chain; its full sequence is PE-PGRS family protein PE_PGRS60 (104 aa).

The PE domain maps to 1–60 (MSYVIAAPEALVAAATDLATLGSTIGAANAAAAGSTTALLTAGADEVSAAIAAYSECTAR). The disordered stretch occupies residues 64-104 (HSVRGRRRSMSGSCRPWPQVGAPMRPPRPPASRRCRARSIC). Over residues 94 to 104 (ASRRCRARSIC) the composition is skewed to basic residues.

Belongs to the mycobacterial PE family. PGRS subfamily.

Functionally, binds fibronectin. May contribute to pathogenicity. This is PE-PGRS family protein PE_PGRS60 from Mycobacterium tuberculosis (strain ATCC 25618 / H37Rv).